A 513-amino-acid chain; its full sequence is GMP synthase [glutamine-hydrolyzing] (513 aa).

Residues 9-198 enclose the Glutamine amidotransferase type-1 domain; it reads LILVLDFGSQ…VRRVCNCTGE (190 aa). C86 serves as the catalytic Nucleophile. Residues H172 and E174 contribute to the active site. Residues 199 to 388 form the GMPS ATP-PPase domain; it reads WTMENFIEIE…LGIPEHLVWR (190 aa). An ATP-binding site is contributed by 226–232; sequence SGGVDSS.

As to quaternary structure, homodimer.

The enzyme catalyses XMP + L-glutamine + ATP + H2O = GMP + L-glutamate + AMP + diphosphate + 2 H(+). It functions in the pathway purine metabolism; GMP biosynthesis; GMP from XMP (L-Gln route): step 1/1. Functionally, catalyzes the synthesis of GMP from XMP. In Staphylococcus epidermidis (strain ATCC 12228 / FDA PCI 1200), this protein is GMP synthase [glutamine-hydrolyzing].